Consider the following 229-residue polypeptide: uncharacterized protein (229 aa).

7 helical membrane passes run 21 to 41, 56 to 76, 83 to 103, 109 to 129, 141 to 161, 162 to 182, and 202 to 222; these read IYSL…LMLY, MIYY…SGAA, ALPI…FIIV, TVFQ…IIGV, AMFA…FIGS, GMMS…LIAS, and WAVA…ISLL.

This sequence belongs to the BI1 family.

The protein resides in the cell membrane. This is an uncharacterized protein from Streptococcus pyogenes serotype M3 (strain ATCC BAA-595 / MGAS315).